A 93-amino-acid polypeptide reads, in one-letter code: MKPDIHPAYRTVLFHDTAADAYFLIGSTVDTDRTQQHTDGTTYPYVALDVSSASHPMYTGQQRKTTTEGRIAGFNKRFASFGSGSNKETAATQ.

It belongs to the bacterial ribosomal protein bL31 family. Type B subfamily. In terms of assembly, part of the 50S ribosomal subunit.

This chain is Large ribosomal subunit protein bL31B, found in Pseudomonas syringae pv. tomato (strain ATCC BAA-871 / DC3000).